A 360-amino-acid chain; its full sequence is N5-carboxyaminoimidazole ribonucleotide synthase (360 aa).

Residues arginine 98, lysine 138, glycine 143 to glutamine 149, glutamate 173 to valine 176, glutamate 181, histidine 204, and asparagine 255 to glutamate 256 contribute to the ATP site. The ATP-grasp domain occupies lysine 102–alanine 285.

This sequence belongs to the PurK/PurT family. Homodimer.

The catalysed reaction is 5-amino-1-(5-phospho-beta-D-ribosyl)imidazole + hydrogencarbonate + ATP = 5-carboxyamino-1-(5-phospho-D-ribosyl)imidazole + ADP + phosphate + 2 H(+). Its pathway is purine metabolism; IMP biosynthesis via de novo pathway; 5-amino-1-(5-phospho-D-ribosyl)imidazole-4-carboxylate from 5-amino-1-(5-phospho-D-ribosyl)imidazole (N5-CAIR route): step 1/2. Functionally, catalyzes the ATP-dependent conversion of 5-aminoimidazole ribonucleotide (AIR) and HCO(3)(-) to N5-carboxyaminoimidazole ribonucleotide (N5-CAIR). This Pseudomonas aeruginosa (strain ATCC 15692 / DSM 22644 / CIP 104116 / JCM 14847 / LMG 12228 / 1C / PRS 101 / PAO1) protein is N5-carboxyaminoimidazole ribonucleotide synthase.